The chain runs to 423 residues: Ankyrin repeat and SAM domain-containing protein 4B (423 aa).

Positions 1–251 (MSTRYHQAAS…PKDFKEKLHF (251 aa)) are mediates localization to microvilli. 3 ANK repeats span residues 31–60 (DGMT…DPDK), 64–93 (WGNT…NIFA), and 97–126 (DLKS…VQNT). A coiled-coil region spans residues 130 to 169 (KRVTRLKEQALKNARKQMKECERLQERHQNKMARTYSKED). 3 disordered regions span residues 158–181 (QNKM…STLS), 207–227 (KSKK…SGQR), and 303–335 (QRQG…AGDL). Residues 171–181 (GTISSSHSTLS) show a composition bias toward low complexity. The span at 207-224 (KSKKNKDTTEQLEKDGRS) shows a compositional bias: basic and acidic residues. Residues 253-352 (VEEDDDVQHE…EWEEDAVDAT (100 aa)) are mediates interaction with MYO7B. Positions 301–335 (LFQRQGAAGTVEEEEEEEEEEEEEKREANGTAGDL) form a coiled coil. The segment covering 311-324 (VEEEEEEEEEEEEE) has biased composition (acidic residues). An SAM domain is found at 357-409 (FLQSQHLEEFLPIFMREQIDLEALLLCSDEDLQNIHMQLGPRKKVLSAIDKRK). The PDZ-binding; mediates interaction with USH1C motif lies at 421 to 423 (TSL).

As to quaternary structure, part of the IMAC/intermicrovillar adhesion complex/intermicrovillar tip-link complex composed of ANKS4B, MYO7B, USH1C, CDHR2 and CDHR5. Interacts with USH1C; the interaction is direct and is required for ANKS4B localization to the tip of microvilli. Interacts with MYO7B; the interaction is direct. May interact with HSPA5. As to expression, cochlea, kidney, lung, liver, pancreas, salivary gland and small intestine (at protein level). Expressed in kidney, small intestine, pancreas, liver and colon. Not detected in heart, spleen and brain.

It localises to the cell projection. The protein resides in the microvillus. As part of the intermicrovillar adhesion complex/IMAC plays a role in epithelial brush border differentiation, controlling microvilli organization and length. Plays a role in assembly of the complex. May play a role in cellular response to endoplasmic reticulum stress. The protein is Ankyrin repeat and SAM domain-containing protein 4B of Mus musculus (Mouse).